Reading from the N-terminus, the 249-residue chain is 2,3,4,5-tetrahydropyridine-2,6-dicarboxylate N-acetyltransferase (249 aa).

Belongs to the transferase hexapeptide repeat family. DapH subfamily.

The enzyme catalyses (S)-2,3,4,5-tetrahydrodipicolinate + acetyl-CoA + H2O = L-2-acetamido-6-oxoheptanedioate + CoA. It functions in the pathway amino-acid biosynthesis; L-lysine biosynthesis via DAP pathway; LL-2,6-diaminopimelate from (S)-tetrahydrodipicolinate (acetylase route): step 1/3. Catalyzes the transfer of an acetyl group from acetyl-CoA to tetrahydrodipicolinate. The chain is 2,3,4,5-tetrahydropyridine-2,6-dicarboxylate N-acetyltransferase from Fervidobacterium nodosum (strain ATCC 35602 / DSM 5306 / Rt17-B1).